Reading from the N-terminus, the 932-residue chain is AP-3 complex subunit delta (932 aa).

Thr2 is modified (N-acetylthreonine). HEAT repeat units follow at residues 157–194 (SLAR…QYPE), 196–231 (LRDN…KNPQ), 233–269 (FIQL…VEPK), 270–307 (LRAK…LEED), 310–346 (ETAM…KINT), 347–384 (DFIS…EDNL), 386–425 (AIVQ…ENYK), 427–466 (KMVN…DISD), 490–527 (VTIA…TLVE), 528–564 (NGND…NWCN), 570–601 (KRFE…ERSV), and 602–638 (EVLE…AYEL). Phosphoserine occurs at positions 700 and 727. The tract at residues 720–868 (EREKERMSNP…EEGNLRKEDE (149 aa)) is disordered. 2 stretches are compositionally biased toward basic and acidic residues: residues 738–747 (ERTKNSKDLL) and 755–766 (SDKKPETIRLNR). Thr767 is modified (phosphothreonine). Residues 767–779 (TDNSLNSLSLSTT) show a composition bias toward low complexity. Ser770 and Ser773 each carry phosphoserine. Residues 783-793 (RKKKKGKKKNR) are compositionally biased toward basic residues. At Ser798 the chain carries Phosphoserine. The span at 806–832 (APKRKDAFQKPHDNHSTQNPLKKDKIN) shows a compositional bias: basic and acidic residues. Residues 838–855 (QLENFDFSNFGQSSNAGR) are compositionally biased toward polar residues. Residues 857–868 (SQEEGNLRKEDE) are compositionally biased toward basic and acidic residues. A coiled-coil region spans residues 858-878 (QEEGNLRKEDELELSRLEANL). Ser888 bears the Phosphoserine mark. The segment covering 897 to 915 (KKKKKGKKSKSKNKLKTKA) has biased composition (basic residues). A disordered region spans residues 897 to 932 (KKKKKGKKSKSKNKLKTKAKNSPEPNEFLRDQSTDI). Ser918 is subject to Phosphoserine. The span at 923-932 (EFLRDQSTDI) shows a compositional bias: basic and acidic residues.

It belongs to the adaptor complexes large subunit family. In terms of assembly, adaptor protein complex 3 (AP-3) is a heterotetramer composed of 2 large adaptins (APL5 and APL6), a medium adaptin (APM3) and a small adaptin (APS3). Interacts with VPS41.

It is found in the golgi apparatus. Its subcellular location is the cytoplasmic vesicle. The protein resides in the clathrin-coated vesicle membrane. Its function is as follows. Part of the AP-3 complex, an adaptor-related complex which is not clathrin-associated. The complex is associated with the Golgi region as well as more peripheral structures. It facilitates the budding of vesicles from the Golgi membrane and may be directly involved in trafficking to the vacuole. Required for the transport via the ALP pathway, which directs the transport of the cargo proteins PHO8 and VAM3 to the vacuole. This is AP-3 complex subunit delta (APL5) from Saccharomyces cerevisiae (strain ATCC 204508 / S288c) (Baker's yeast).